Reading from the N-terminus, the 423-residue chain is Adenylosuccinate synthetase (423 aa).

GTP contacts are provided by residues 12–18 and 40–42; these read GDEGKGK and GHT. Asp13 acts as the Proton acceptor in catalysis. Residues Asp13 and Gly40 each contribute to the Mg(2+) site. IMP is bound by residues 13 to 16, 38 to 41, Thr129, Arg143, Gln221, Thr236, and Arg300; these read DEGK and NAGH. His41 (proton donor) is an active-site residue. 296 to 302 is a substrate binding site; sequence SVTGRKR. Residues Arg302 and 408 to 410 each bind GTP; that span reads SVG.

The protein belongs to the adenylosuccinate synthetase family. Homodimer. It depends on Mg(2+) as a cofactor.

The protein resides in the cytoplasm. It carries out the reaction IMP + L-aspartate + GTP = N(6)-(1,2-dicarboxyethyl)-AMP + GDP + phosphate + 2 H(+). Its pathway is purine metabolism; AMP biosynthesis via de novo pathway; AMP from IMP: step 1/2. Functionally, plays an important role in the de novo pathway of purine nucleotide biosynthesis. Catalyzes the first committed step in the biosynthesis of AMP from IMP. The sequence is that of Adenylosuccinate synthetase from Bacteroides thetaiotaomicron (strain ATCC 29148 / DSM 2079 / JCM 5827 / CCUG 10774 / NCTC 10582 / VPI-5482 / E50).